The sequence spans 366 residues: Tudor domain-containing protein 10 (366 aa).

Positions 34–107 constitute an RRM domain; it reads TEVYVGNLPL…RKLFVNTSKR (74 aa). One can recognise a Tudor domain in the interval 210-317; sequence FWAMHVTEAL…PLTQPFMLEK (108 aa). Residues 216-237 are a coiled coil; that stretch reads TEALHQNMQALFSTLAQAEEQQ.

This chain is Tudor domain-containing protein 10 (TDRD10), found in Homo sapiens (Human).